The following is a 382-amino-acid chain: Alkane 1-monooxygenase 1 (382 aa).

4 consecutive transmembrane segments (helical) span residues 10–30 (MLAI…SMPF), 43–63 (FWAF…DMLF), 90–110 (LATV…FVAF), and 121–141 (WILS…HELI). Fe cation contacts are provided by His-138 and His-142. The chain crosses the membrane as a helical span at residues 146–166 (ALEQAAGGILLAAVCYAGFKV). Fe cation-binding residues include His-168, His-172, and His-173. The chain crosses the membrane as a helical span at residues 236-256 (LALLVGFGWAFGWLGMVFFLG). His-312, His-315, and His-316 together coordinate Fe cation.

The protein belongs to the fatty acid desaturase type 1 family. AlkB subfamily. It depends on Fe(3+) as a cofactor.

It is found in the cell inner membrane. The catalysed reaction is octane + 2 reduced [rubredoxin] + O2 + 2 H(+) = 2 oxidized [rubredoxin] + octan-1-ol + H2O. It functions in the pathway hydrocarbon metabolism; alkane degradation. Catalyzes the hydroxylation of n-alkanes in the presence of a NADH-rubredoxin reductase and rubredoxin. It preferably hydroxylases C16-C24 hydrocarbons. This chain is Alkane 1-monooxygenase 1 (alkB1), found in Pseudomonas aeruginosa (strain ATCC 15692 / DSM 22644 / CIP 104116 / JCM 14847 / LMG 12228 / 1C / PRS 101 / PAO1).